The following is a 448-amino-acid chain: SVP1-like protein 2 (448 aa).

N-linked (GlcNAc...) asparagine glycosylation is found at Asn61, Asn155, Asn256, Asn280, Asn315, and Asn421. WD repeat units follow at residues 222 to 262 and 267 to 306; these read AHKN…LIKE and VDKA…NTET. Positions 416–435 are disordered; that stretch reads THYSLNESLRNEDTKSAGEP. The segment covering 424–435 has biased composition (basic and acidic residues); it reads LRNEDTKSAGEP.

This sequence belongs to the WD repeat PROPPIN family. Post-translationally, N-glycosylated.

Its subcellular location is the endosome membrane. It localises to the prevacuolar compartment membrane. Functionally, involved in piecemeal microautophagy of the nucleus (micronucleophagy). The polypeptide is SVP1-like protein 2 (HSV2) (Saccharomyces cerevisiae (strain ATCC 204508 / S288c) (Baker's yeast)).